A 745-amino-acid polypeptide reads, in one-letter code: Junction plakoglobin (745 aa).

M1 is subject to N-acetylmethionine. O-linked (GlcNAc) threonine glycosylation is present at T14. Phosphoserine occurs at positions 99 and 125. 12 ARM repeats span residues 132 to 171 (NYQD…QLSK), 172 to 215 (KEAS…LSHH), 216 to 255 (REGL…NLLL), 258 to 297 (EGAK…LLAY), 298 to 341 (GNQE…LSVC), 342 to 381 (PSNK…NLSD), 383 to 420 (ATKQ…NLTC), 423 to 464 (SKNK…HLTS), 470 to 510 (EMAQ…NLAL), 512 to 551 (PANH…QPYT), 574 to 613 (PMNR…ELAQ), and 615 to 661 (KEAA…PDYR). The interval 132 to 297 (NYQDDAELAT…TTDCLQLLAY (166 aa)) is interaction with DSC1 and DSG1. S182 is modified (phosphoserine). Positions 574 to 661 (PMNRMEIFRL…ISEDKNPDYR (88 aa)) are interaction with DSC1. Phosphoserine is present on residues S665 and S730.

This sequence belongs to the beta-catenin family. In terms of assembly, homodimer. Component of an E-cadherin/catenin adhesion complex composed of at least E-cadherin/CDH1 and gamma-catenin/JUP, and possibly alpha-catenin/CTNNA1; the complex is located to adherens junctions. The stable association of CTNNA1 is controversial as CTNNA1 was shown not to bind to F-actin when assembled in the complex. Interacts with MUC1. Interacts with CAV1. Interacts with PTPRJ. Interacts with DSG1. Interacts with DSC1 and DSC2. Interacts with PKP2. Interacts with PKP3 (via N-terminus); the interaction is required for PKP3 localization to desmosome cell-cell junctions. Interacts with DSG4. Post-translationally, may be phosphorylated by FER. In terms of tissue distribution, expressed in the heart (at protein level).

The protein resides in the cell junction. It localises to the adherens junction. The protein localises to the desmosome. It is found in the cytoplasm. Its subcellular location is the cytoskeleton. The protein resides in the cell membrane. It localises to the nucleus. Its function is as follows. Common junctional plaque protein. The membrane-associated plaques are architectural elements in an important strategic position to influence the arrangement and function of both the cytoskeleton and the cells within the tissue. The presence of plakoglobin in both the desmosomes and in the intermediate junctions suggests that it plays a central role in the structure and function of submembranous plaques. Acts as a substrate for VE-PTP and is required by it to stimulate VE-cadherin function in endothelial cells. Can replace beta-catenin in E-cadherin/catenin adhesion complexes which are proposed to couple cadherins to the actin cytoskeleton. The sequence is that of Junction plakoglobin from Homo sapiens (Human).